A 105-amino-acid polypeptide reads, in one-letter code: T cell receptor alpha variable 40 (105 aa).

An N-terminal signal peptide occupies residues methionine 1–serine 19. An Ig-like domain is found at asparagine 20–glycine 105. N-linked (GlcNAc...) asparagine glycosylation occurs at asparagine 39. A disulfide bridge connects residues cysteine 40 and cysteine 102.

As to quaternary structure, alpha-beta TR is a heterodimer composed of an alpha and beta chain; disulfide-linked. The alpha-beta TR is associated with the transmembrane signaling CD3 coreceptor proteins to form the TR-CD3 (TcR or TCR). The assembly of alpha-beta TR heterodimers with CD3 occurs in the endoplasmic reticulum where a single alpha-beta TR heterodimer associates with one CD3D-CD3E heterodimer, one CD3G-CD3E heterodimer and one CD247 homodimer forming a stable octameric structure. CD3D-CD3E and CD3G-CD3E heterodimers preferentially associate with TR alpha and TR beta chains, respectively. The association of the CD247 homodimer is the last step of TcR assembly in the endoplasmic reticulum and is required for transport to the cell surface.

The protein resides in the cell membrane. V region of the variable domain of T cell receptor (TR) alpha chain that participates in the antigen recognition. Alpha-beta T cell receptors are antigen specific receptors which are essential to the immune response and are present on the cell surface of T lymphocytes. Recognize peptide-major histocompatibility (MH) (pMH) complexes that are displayed by antigen presenting cells (APC), a prerequisite for efficient T cell adaptive immunity against pathogens. Binding of alpha-beta TR to pMH complex initiates TR-CD3 clustering on the cell surface and intracellular activation of LCK that phosphorylates the ITAM motifs of CD3G, CD3D, CD3E and CD247 enabling the recruitment of ZAP70. In turn ZAP70 phosphorylates LAT, which recruits numerous signaling molecules to form the LAT signalosome. The LAT signalosome propagates signal branching to three major signaling pathways, the calcium, the mitogen-activated protein kinase (MAPK) kinase and the nuclear factor NF-kappa-B (NF-kB) pathways, leading to the mobilization of transcription factors that are critical for gene expression and essential for T cell growth and differentiation. The T cell repertoire is generated in the thymus, by V-(D)-J rearrangement. This repertoire is then shaped by intrathymic selection events to generate a peripheral T cell pool of self-MH restricted, non-autoaggressive T cells. Post-thymic interaction of alpha-beta TR with the pMH complexes shapes TR structural and functional avidity. The sequence is that of T cell receptor alpha variable 40 from Homo sapiens (Human).